The sequence spans 258 residues: Imidazole glycerol phosphate synthase subunit HisF (258 aa).

Residues D12 and D131 contribute to the active site.

This sequence belongs to the HisA/HisF family. As to quaternary structure, heterodimer of HisH and HisF.

The protein localises to the cytoplasm. The catalysed reaction is 5-[(5-phospho-1-deoxy-D-ribulos-1-ylimino)methylamino]-1-(5-phospho-beta-D-ribosyl)imidazole-4-carboxamide + L-glutamine = D-erythro-1-(imidazol-4-yl)glycerol 3-phosphate + 5-amino-1-(5-phospho-beta-D-ribosyl)imidazole-4-carboxamide + L-glutamate + H(+). It participates in amino-acid biosynthesis; L-histidine biosynthesis; L-histidine from 5-phospho-alpha-D-ribose 1-diphosphate: step 5/9. Functionally, IGPS catalyzes the conversion of PRFAR and glutamine to IGP, AICAR and glutamate. The HisF subunit catalyzes the cyclization activity that produces IGP and AICAR from PRFAR using the ammonia provided by the HisH subunit. This is Imidazole glycerol phosphate synthase subunit HisF from Nitrosomonas eutropha (strain DSM 101675 / C91 / Nm57).